Consider the following 626-residue polypeptide: DNA mismatch repair protein MutL (626 aa).

This sequence belongs to the DNA mismatch repair MutL/HexB family.

This protein is involved in the repair of mismatches in DNA. It is required for dam-dependent methyl-directed DNA mismatch repair. May act as a 'molecular matchmaker', a protein that promotes the formation of a stable complex between two or more DNA-binding proteins in an ATP-dependent manner without itself being part of a final effector complex. This Cellvibrio japonicus (strain Ueda107) (Pseudomonas fluorescens subsp. cellulosa) protein is DNA mismatch repair protein MutL.